We begin with the raw amino-acid sequence, 452 residues long: Probable mannose-6-phosphate isomerase (452 aa).

4 residues coordinate Zn(2+): Gln141, His143, Glu168, and His295. The active site involves Arg314.

Belongs to the mannose-6-phosphate isomerase type 1 family. Zn(2+) is required as a cofactor.

The protein localises to the cytoplasm. It catalyses the reaction D-mannose 6-phosphate = D-fructose 6-phosphate. The protein operates within nucleotide-sugar biosynthesis; GDP-alpha-D-mannose biosynthesis; alpha-D-mannose 1-phosphate from D-fructose 6-phosphate: step 1/2. Its function is as follows. Involved in the synthesis of the GDP-mannose and dolichol-phosphate-mannose required for a number of critical mannosyl transfer reactions. This is Probable mannose-6-phosphate isomerase (mpi) from Dictyostelium discoideum (Social amoeba).